We begin with the raw amino-acid sequence, 892 residues long: Alanine--tRNA ligase (892 aa).

Residues His-574, His-578, Cys-676, and His-680 each contribute to the Zn(2+) site.

It belongs to the class-II aminoacyl-tRNA synthetase family. It depends on Zn(2+) as a cofactor.

Its subcellular location is the cytoplasm. The enzyme catalyses tRNA(Ala) + L-alanine + ATP = L-alanyl-tRNA(Ala) + AMP + diphosphate. Functionally, catalyzes the attachment of alanine to tRNA(Ala) in a two-step reaction: alanine is first activated by ATP to form Ala-AMP and then transferred to the acceptor end of tRNA(Ala). Also edits incorrectly charged Ser-tRNA(Ala) and Gly-tRNA(Ala) via its editing domain. This Prochlorococcus marinus (strain MIT 9313) protein is Alanine--tRNA ligase.